The sequence spans 374 residues: 5-hydroxytryptamine receptor 1D (374 aa).

At 1–35 the chain is on the extracellular side; sequence MSPPNQSLEGLPQEASNRSLNVTGAWDPEVLQALR. Residues Asn5, Asn17, and Asn21 are each glycosylated (N-linked (GlcNAc...) asparagine). Residues 36–61 traverse the membrane as a helical segment; it reads ISLVVVLSVITLATVLSNAFVLTTIL. Over 62–72 the chain is Cytoplasmic; the sequence is LTKKLHTPANY. The chain crosses the membrane as a helical span at residues 73–94; that stretch reads LIGSLATTDLLVSILVMPISIA. Residues 95 to 106 lie on the Extracellular side of the membrane; the sequence is YTTTRTWNFGQI. A helical transmembrane segment spans residues 107 to 131; it reads LCDIWVSSDITCCTASILHLCVIAL. Cysteines 108 and 185 form a disulfide. Serotonin is bound by residues Asp115 and Cys119. Residues 132 to 134 carry the DRY motif; important for ligand-induced conformation changes motif; that stretch reads DRY. Residues 132-151 are Cytoplasmic-facing; the sequence is DRYWAITDALEYSKRRTAGH. A helical transmembrane segment spans residues 152–173; the sequence is AAAMIAAVWIISICISIPPLFW. Residues 174–191 lie on the Extracellular side of the membrane; that stretch reads RQATAHEEMSDCLVNTSQ. The chain crosses the membrane as a helical span at residues 192-215; it reads ISYTIYSTCGAFYIPSILLIILYG. At 216 to 297 the chain is on the cytoplasmic side; that stretch reads RIYVAARSRI…ISAARERKAT (82 aa). A helical membrane pass occupies residues 298-323; that stretch reads KTLGIILGAFIICWLPFFVVSLVLPI. Ser318 contacts serotonin. At 324–332 the chain is on the extracellular side; it reads CRDSCWIHP. A helical transmembrane segment spans residues 333–356; sequence ALFDFFTWLGYLNSLINPVIYTVF. An NPxxY motif; important for ligand-induced conformation changes and signaling motif is present at residues 349-353; it reads NPVIY. Residues 357-374 are Cytoplasmic-facing; the sequence is NEDFRQAFQKVVHFRKIS.

This sequence belongs to the G-protein coupled receptor 1 family. In terms of assembly, homodimer. Heterodimer with HTR1B. Detected in the motor column in spinal cord, and in several cranial motor nuclei, including nucleus ambiguous, oculomotoris, trochelaris and abducens. Detected in gamma motor neurons in the lumbar spinal cord. Detected in proprioceptive sensory neurons in dorsal root ganglia.

It is found in the cell membrane. In terms of biological role, G-protein coupled receptor for 5-hydroxytryptamine (serotonin). Also functions as a receptor for ergot alkaloid derivatives, various anxiolytic and antidepressant drugs and other psychoactive substances. Ligand binding causes a conformation change that triggers signaling via guanine nucleotide-binding proteins (G proteins) and modulates the activity of downstream effectors, such as adenylate cyclase. HTR1D is coupled to G(i)/G(o) G alpha proteins and mediates inhibitory neurotransmission by inhibiting adenylate cyclase activity. Regulates the release of 5-hydroxytryptamine in the brain, and thereby affects neural activity. May also play a role in regulating the release of other neurotransmitters. May play a role in vasoconstriction. The chain is 5-hydroxytryptamine receptor 1D (Htr1d) from Mus musculus (Mouse).